The chain runs to 283 residues: MTGEQEWVQPSGVWATAVGVARVRALESEREDALFRDPLAQAFAAAGGLWPSSPPLPDDEAARRRRLAVAFSIVVRTKFLDDLLEHATASGVRQVVLLGAGMDSRAFRMAWPEGTRLFEVDTPAPLEFKASVLRQERAVAHCERITVAVDLREDWPSALAAAGHDAAIPTAWIGEGLLIYLPEDAVELLLARIGEQSASGSRMGLTLGSRGVIERFAAGAVPGSAASMWVSEMPDDPVGWLAGHGWEASCHTLRERAVAYGRPMSTLPQHEDGPGGLISAVRR.

Residues Asp-121 and 150 to 151 (DL) contribute to the S-adenosyl-L-methionine site. Residues 264–283 (MSTLPQHEDGPGGLISAVRR) are disordered.

The protein belongs to the UPF0677 family.

In terms of biological role, exhibits S-adenosyl-L-methionine-dependent methyltransferase activity. This is Putative S-adenosyl-L-methionine-dependent methyltransferase SCO7813 from Streptomyces coelicolor (strain ATCC BAA-471 / A3(2) / M145).